The chain runs to 326 residues: N-acetyl-gamma-glutamyl-phosphate reductase (326 aa).

Cys-155 is a catalytic residue.

The protein belongs to the NAGSA dehydrogenase family. Type 1 subfamily.

Its subcellular location is the cytoplasm. The enzyme catalyses N-acetyl-L-glutamate 5-semialdehyde + phosphate + NADP(+) = N-acetyl-L-glutamyl 5-phosphate + NADPH + H(+). Its pathway is amino-acid biosynthesis; L-arginine biosynthesis; N(2)-acetyl-L-ornithine from L-glutamate: step 3/4. Functionally, catalyzes the NADPH-dependent reduction of N-acetyl-5-glutamyl phosphate to yield N-acetyl-L-glutamate 5-semialdehyde. In Shewanella baltica (strain OS185), this protein is N-acetyl-gamma-glutamyl-phosphate reductase.